The following is a 513-amino-acid chain: NAD(P)H-quinone oxidoreductase subunit 2, chloroplastic (513 aa).

The next 14 membrane-spanning stretches (helical) occupy residues 11–31, 38–58, 78–98, 112–132, 133–153, 167–187, 219–239, 256–276, 290–310, 318–338, 348–368, 389–409, 422–442, and 478–498; these read NLITILPECVLIICLLTILMI, SVWLSNIALLGLLTSTFILLF, GFTIAFRCLLTLSSALCIPLS, FLILLLTATLGGMFLCGANDL, VTIFVSLECLSLSSYLLAGQA, LLMGGASSSILVYGFSWLYGL, FGALGLWVAFVCILVGIGFKI, PTPVVAFLSVGSKAAGLALAT, WHIVLEIVAFLSMVFGNLIAA, MLAYSSISQAGYLLIAILVGN, YLLIYTFMNLGAFACTVIFGL, AFALSICLLSLAGMPPLAGFF, HLYLLVYTGLITSVISLYYYL, and LGLTLCVLASSILGFFMNPLI.

Belongs to the complex I subunit 2 family. In terms of assembly, NDH is composed of at least 16 different subunits, 5 of which are encoded in the nucleus.

The protein localises to the plastid. Its subcellular location is the chloroplast thylakoid membrane. It catalyses the reaction a plastoquinone + NADH + (n+1) H(+)(in) = a plastoquinol + NAD(+) + n H(+)(out). It carries out the reaction a plastoquinone + NADPH + (n+1) H(+)(in) = a plastoquinol + NADP(+) + n H(+)(out). NDH shuttles electrons from NAD(P)H:plastoquinone, via FMN and iron-sulfur (Fe-S) centers, to quinones in the photosynthetic chain and possibly in a chloroplast respiratory chain. The immediate electron acceptor for the enzyme in this species is believed to be plastoquinone. Couples the redox reaction to proton translocation, and thus conserves the redox energy in a proton gradient. The polypeptide is NAD(P)H-quinone oxidoreductase subunit 2, chloroplastic (Staurastrum punctulatum (Green alga)).